Consider the following 1031-residue polypeptide: Putative protein TIC 214 N-terminal part (1031 aa).

Helical transmembrane passes span 11-31 (ILWA…LFGL), 68-88 (TLGQ…IMLL), 92-112 (AITL…KDLS), 127-147 (GIIQ…ILLP), 166-186 (SFFV…LINL), and 212-232 (TFSI…PVPF).

The protein belongs to the TIC214 family. In terms of assembly, part of the Tic complex.

It localises to the plastid. It is found in the chloroplast inner membrane. Functionally, involved in protein precursor import into chloroplasts. May be part of an intermediate translocation complex acting as a protein-conducting channel at the inner envelope. The sequence is that of Putative protein TIC 214 N-terminal part from Anthoceros angustus (Hornwort).